The primary structure comprises 289 residues: Acetylglutamate kinase (289 aa).

Residues 65 to 66, Arg-87, and Asn-187 each bind substrate; that span reads GG.

This sequence belongs to the acetylglutamate kinase family. ArgB subfamily.

The protein localises to the cytoplasm. The enzyme catalyses N-acetyl-L-glutamate + ATP = N-acetyl-L-glutamyl 5-phosphate + ADP. The protein operates within amino-acid biosynthesis; L-arginine biosynthesis; N(2)-acetyl-L-ornithine from L-glutamate: step 2/4. Functionally, catalyzes the ATP-dependent phosphorylation of N-acetyl-L-glutamate. This is Acetylglutamate kinase from Chromobacterium violaceum (strain ATCC 12472 / DSM 30191 / JCM 1249 / CCUG 213 / NBRC 12614 / NCIMB 9131 / NCTC 9757 / MK).